The following is an 85-amino-acid chain: Large ribosomal subunit protein bL27 (85 aa).

The interval 1–21 (MAHKKAAGSTKNGRDSNAKRL) is disordered.

This sequence belongs to the bacterial ribosomal protein bL27 family.

The polypeptide is Large ribosomal subunit protein bL27 (Hydrogenovibrio crunogenus (strain DSM 25203 / XCL-2) (Thiomicrospira crunogena)).